The primary structure comprises 107 residues: DNA polymerase delta subunit 4 (107 aa).

The PCNA-interaction protein motif (PIP box) signature appears at 1–16; sequence MGRKRLITDSYPVVKR. The interval 1–35 is disordered; the sequence is MGRKRLITDSYPVVKRREGSAGHSKGELAPDLGEE. The span at 15–28 shows a compositional bias: basic and acidic residues; the sequence is KRREGSAGHSKGEL.

This sequence belongs to the DNA polymerase delta subunit 4 family. Component of the tetrameric DNA polymerase delta complex (Pol-delta4), which consists of POLD1/p125, POLD2/p50, POLD3/p66/p68 and POLD4/p12, with POLD1 bearing DNA polymerase and 3' to 5' proofreading exonuclease activities. Within this complex, directly interacts with POLD1 and POLD2. Directly interacts with PCNA, as do POLD1 and POLD3; this interaction stimulates Pol-delta4 polymerase activity. As POLD1 and POLD2, directly interacts with WRNIP1; this interaction stimulates DNA polymerase delta-mediated DNA synthesis, independently of the presence of PCNA, possibly by increasing initiation frequency. Upon genotoxic stress induced by DNA damaging agents or by replication stress, POLD4 is proteolytically degraded and Pol-delta4 is converted into a trimeric form of the complex (Pol-delta3) that has an increased proofreading activity. The DNA polymerase delta complex interacts with POLDIP2; this interaction is probably mediated through direct binding to POLD2. In terms of processing, ubiquitinated; undergoes 'Lys-48'-linked ubiquitination in response to UV irradiation, leading to proteasomal degradation. This modification is partly mediated by RNF8 and by the DCX(DTL) E3 ubiquitin ligase complex (also called CRL4(CDT2)). Efficient degradation requires the presence of PCNA and is required for the inhibition of fork progression after DNA damage.

The protein resides in the nucleus. Its function is as follows. As a component of the tetrameric DNA polymerase delta 4 complex (Pol-delta4), plays a role in high fidelity genome replication and repair. Within this complex, increases the rate of DNA synthesis and decreases fidelity by regulating POLD1 polymerase and proofreading 3' to 5' exonuclease activity. Pol-delta4 participates in Okazaki fragment processing, through both the short flap pathway, as well as a nick translation system. Under conditions of DNA replication stress, required for the repair of broken replication forks through break-induced replication (BIR), a mechanism that may induce segmental genomic duplications of up to 200 kb. Involved in Pol-delta4 translesion synthesis (TLS) of templates carrying O6-methylguanine or abasic sites. Its degradation in response to DNA damage is required for the inhibition of fork progression and cell survival. The polypeptide is DNA polymerase delta subunit 4 (POLD4) (Bos taurus (Bovine)).